The chain runs to 768 residues: Polyadenylate-binding protein, cytoplasmic and nuclear (768 aa).

The segment covering 1-11 (MSAETATNPPV) has biased composition (polar residues). Positions 1 to 52 (MSAETATNPPVDTTPGAAPESATNGSNANVAADTTAGEASQTTSSTTPTAQP) are disordered. Over residues 39-52 (ASQTTSSTTPTAQP) the composition is skewed to low complexity. RRM domains are found at residues 55 to 133 (ASLY…WSQR), 143 to 220 (GNVF…HHIA), 236 to 314 (TNVY…RAQK), and 340 to 470 (VNLY…LAQR). Disordered stretches follow at residues 374-428 (DFAP…EKKP), 633-662 (QQGMGRPGQAGRGQGAPAQAVGQRDENASP), and 739-768 (KNKGGDSGEPAADANKSKDASQETAEETKS). Gly residues predominate over residues 637-646 (GRPGQAGRGQ). One can recognise a PABC domain in the interval 662–739 (PNGLTLQVLN…ALTVYDEYVK (78 aa)). Over residues 753–768 (NKSKDASQETAEETKS) the composition is skewed to basic and acidic residues.

This sequence belongs to the polyadenylate-binding protein type-1 family.

Its subcellular location is the cytoplasm. It is found in the nucleus. Functionally, binds the poly(A) tail of mRNA. Appears to be an important mediator of the multiple roles of the poly(A) tail in mRNA biogenesis, stability and translation. In the nucleus, involved in both mRNA cleavage and polyadenylation. Is also required for efficient mRNA export to the cytoplasm. Acts in concert with a poly(A)-specific nuclease (PAN) to affect poly(A) tail shortening, which may occur concomitantly with either nucleocytoplasmic mRNA transport or translational initiation. In the cytoplasm, stimulates translation initiation and regulates mRNA decay through translation termination-coupled poly(A) shortening, probably mediated by PAN. The chain is Polyadenylate-binding protein, cytoplasmic and nuclear (PAB1) from Coccidioides immitis (strain RS) (Valley fever fungus).